The primary structure comprises 650 residues: MSSQSLYKVSGNIAANALVNNDQYKKMYQESIVNPEGFWREHGKRIDWIKPYTKIKKTSFDDHNLSINWFYDGTLNASANCLDRHLAEHSDRVAIIWEGDNASEQRKITYGELHTQVCKFANALRSQGVRRGDIVTIYMPMVPEAAVAMLACARIGAVHSVVFGGFSPDSIASRVIDGKSKVVITADEGMRGGRAIPLKRNIDDALKHPDVTSVEKVIVLKRTGGKVDWIEGRDVWWHSLVETASEHCAVEEMGAEDPLFLLYTSGSTGNPKGVLHTTGGYMVYASMTHEYVFDYKPGEIYWCTADVGWITGHSYMVYGPLANGATVLIHEGIPNHPSPARLGEMIDRHKVNILYTAPTLIRALMAEGKQHFDKYDGSSLRIMGSVGEPINPEAWRWYHEVIGHEHCPIVDTWWQTETGGILITPLPGATDTKPGSATRPFFGVQPALVDNMGNILEGATEGNLVLLDSWPGQMRTVYGDHERFVLTYFKTFRGMYFTGDGARRDEDGYYWITGRVDDVINVSGHRLGTAEVESALVSHELVAEAAVVGYPHDIKGQGIYAYVTLTRGTEESEELRQELRQWVRKEIGALATPDLIQWATGLPKTRSGKIMRRFLRKIAANEVTNLGDASTLADPAVIETLIETRLNRNE.

CoA is bound by residues 191 to 194 (RGGR), Thr-311, and Asn-335. Residues 387-389 (GEP), 411-416 (DTWWQT), Asp-500, and Arg-515 contribute to the ATP site. Ser-523 serves as a coordination point for CoA. Arg-526 contacts ATP. Val-537, His-539, and Val-542 together coordinate Mg(2+). CoA is bound at residue Arg-584. Residue Lys-609 is modified to N6-acetyllysine.

Belongs to the ATP-dependent AMP-binding enzyme family. The cofactor is Mg(2+). Acetylated. Deacetylation by the SIR2-homolog deacetylase activates the enzyme.

It carries out the reaction acetate + ATP + CoA = acetyl-CoA + AMP + diphosphate. In terms of biological role, catalyzes the conversion of acetate into acetyl-CoA (AcCoA), an essential intermediate at the junction of anabolic and catabolic pathways. AcsA undergoes a two-step reaction. In the first half reaction, AcsA combines acetate with ATP to form acetyl-adenylate (AcAMP) intermediate. In the second half reaction, it can then transfer the acetyl group from AcAMP to the sulfhydryl group of CoA, forming the product AcCoA. This Shewanella sp. (strain MR-4) protein is Acetyl-coenzyme A synthetase.